The primary structure comprises 278 residues: Tryptophan synthase alpha chain (278 aa).

Residues E50 and D61 each act as proton acceptor in the active site.

This sequence belongs to the TrpA family. In terms of assembly, tetramer of two alpha and two beta chains.

It catalyses the reaction (1S,2R)-1-C-(indol-3-yl)glycerol 3-phosphate + L-serine = D-glyceraldehyde 3-phosphate + L-tryptophan + H2O. It participates in amino-acid biosynthesis; L-tryptophan biosynthesis; L-tryptophan from chorismate: step 5/5. Its function is as follows. The alpha subunit is responsible for the aldol cleavage of indoleglycerol phosphate to indole and glyceraldehyde 3-phosphate. The chain is Tryptophan synthase alpha chain from Methylobacterium nodulans (strain LMG 21967 / CNCM I-2342 / ORS 2060).